The primary structure comprises 170 residues: Adenine phosphoribosyltransferase (170 aa).

It belongs to the purine/pyrimidine phosphoribosyltransferase family. As to quaternary structure, homodimer.

Its subcellular location is the cytoplasm. The enzyme catalyses AMP + diphosphate = 5-phospho-alpha-D-ribose 1-diphosphate + adenine. It functions in the pathway purine metabolism; AMP biosynthesis via salvage pathway; AMP from adenine: step 1/1. Catalyzes a salvage reaction resulting in the formation of AMP, that is energically less costly than de novo synthesis. The polypeptide is Adenine phosphoribosyltransferase (Bacillus velezensis (strain DSM 23117 / BGSC 10A6 / LMG 26770 / FZB42) (Bacillus amyloliquefaciens subsp. plantarum)).